A 137-amino-acid polypeptide reads, in one-letter code: Large ribosomal subunit protein uL16 (137 aa).

It belongs to the universal ribosomal protein uL16 family. As to quaternary structure, part of the 50S ribosomal subunit.

In terms of biological role, binds 23S rRNA and is also seen to make contacts with the A and possibly P site tRNAs. In Rhizobium meliloti (strain 1021) (Ensifer meliloti), this protein is Large ribosomal subunit protein uL16.